The primary structure comprises 461 residues: Interleukin-1 receptor-associated kinase 4 (461 aa).

Met-1 bears the N-acetylmethionine mark. Residues 20–104 (RKLSDFIDPQ…APASLLLPDA (85 aa)) enclose the Death domain. Lys-34 is subject to N6-acetyllysine. In terms of domain architecture, Protein kinase spans 187-455 (SVGGNKMGEG…PDIKKVQQLL (269 aa)). ATP contacts are provided by residues 193 to 201 (MGEGGFGVV) and Lys-214. The Proton acceptor role is filled by Asp-312. ATP-binding positions include 314–317 (KSAN) and Asp-330. Residues Thr-343 and Thr-346 each carry the phosphothreonine modification. The residue at position 347 (Ser-347) is a Phosphoserine.

It belongs to the protein kinase superfamily. TKL Ser/Thr protein kinase family. Pelle subfamily. Associates with MYD88 and IRAK2 to form a ternary complex called the Myddosome. Once phosphorylated, IRAK4 dissociates from the receptor complex and then associates with the TNF receptor-associated factor 6 (TRAF6), IRAK1, and PELI1; this intermediate complex is required for subsequent NF-kappa-B activation. Direct binding of SMAD6 to PELI1 prevents complex formation and hence negatively regulates IL1R-TLR signaling and eventually NF-kappa-B-mediated gene expression. Interacts with IL1RL1. Interacts (when phosphorylated) with IRAK1. May interact (when phosphorylated) with IRAK3. The cofactor is Mg(2+). Phosphorylated.

The protein localises to the cytoplasm. It carries out the reaction L-seryl-[protein] + ATP = O-phospho-L-seryl-[protein] + ADP + H(+). The catalysed reaction is L-threonyl-[protein] + ATP = O-phospho-L-threonyl-[protein] + ADP + H(+). Its function is as follows. Serine/threonine-protein kinase that plays a critical role in initiating innate immune response against foreign pathogens. Involved in Toll-like receptor (TLR) and IL-1R signaling pathways. Is rapidly recruited by MYD88 to the receptor-signaling complex upon TLR activation to form the Myddosome together with IRAK2. Phosphorylates initially IRAK1, thus stimulating the kinase activity and intensive autophosphorylation of IRAK1. Phosphorylates E3 ubiquitin ligases Pellino proteins (PELI1, PELI2 and PELI3) to promote pellino-mediated polyubiquitination of IRAK1. Then, the ubiquitin-binding domain of IKBKG/NEMO binds to polyubiquitinated IRAK1 bringing together the IRAK1-MAP3K7/TAK1-TRAF6 complex and the NEMO-IKKA-IKKB complex. In turn, MAP3K7/TAK1 activates IKKs (CHUK/IKKA and IKBKB/IKKB) leading to NF-kappa-B nuclear translocation and activation. Alternatively, phosphorylates TIRAP to promote its ubiquitination and subsequent degradation. Phosphorylates NCF1 and regulates NADPH oxidase activation after LPS stimulation suggesting a similar mechanism during microbial infections. The polypeptide is Interleukin-1 receptor-associated kinase 4 (IRAK4) (Bos taurus (Bovine)).